The primary structure comprises 396 residues: Elongation factor Tu 1 (396 aa).

Residues 10–206 (KPHINVGTIG…VLDSYIPEPQ (197 aa)) enclose the tr-type G domain. Residues 19–26 (GHVDHGKT) form a G1 region. Residue 19–26 (GHVDHGKT) participates in GTP binding. Mg(2+) is bound at residue Thr-26. Positions 60–64 (GITIN) are G2. Residues 81 to 84 (DCPG) form a G3 region. GTP-binding positions include 81–85 (DCPGH) and 136–139 (NKAD). The tract at residues 136–139 (NKAD) is G4. The segment at 174–176 (SAL) is G5.

This sequence belongs to the TRAFAC class translation factor GTPase superfamily. Classic translation factor GTPase family. EF-Tu/EF-1A subfamily. In terms of assembly, monomer.

Its subcellular location is the cytoplasm. It carries out the reaction GTP + H2O = GDP + phosphate + H(+). Functionally, GTP hydrolase that promotes the GTP-dependent binding of aminoacyl-tRNA to the A-site of ribosomes during protein biosynthesis. The chain is Elongation factor Tu 1 from Nitrosomonas eutropha (strain DSM 101675 / C91 / Nm57).